The primary structure comprises 345 residues: DNA-directed RNA polymerases I and III subunit rpac1 (345 aa).

Residues 1–11 show a composition bias toward polar residues; that stretch reads MVNKSTTNGVS. A disordered region spans residues 1 to 20; it reads MVNKSTTNGVSDPNLENKRT.

The protein belongs to the archaeal Rpo3/eukaryotic RPB3 RNA polymerase subunit family. In terms of assembly, component of the RNA polymerase I (Pol I) and RNA polymerase III (Pol III) complexes consisting of at least 13 and 17 subunits, respectively. Interacts with RPAC19/RPAC2.

Its subcellular location is the nucleus. In terms of biological role, DNA-dependent RNA polymerase catalyzes the transcription of DNA into RNA using the four ribonucleoside triphosphates as substrates. Common component of RNA polymerases I and III which synthesize ribosomal RNA precursors and small RNAs, such as 5S rRNA and tRNAs, respectively. RPAC1 is part of the Pol core element with the central large cleft and probably a clamp element that moves to open and close the cleft. The protein is DNA-directed RNA polymerases I and III subunit rpac1 (polr1c) of Dictyostelium discoideum (Social amoeba).